We begin with the raw amino-acid sequence, 127 residues long: Large ribosomal subunit protein bL12 (127 aa).

It belongs to the bacterial ribosomal protein bL12 family. As to quaternary structure, homodimer. Part of the ribosomal stalk of the 50S ribosomal subunit. Forms a multimeric L10(L12)X complex, where L10 forms an elongated spine to which 2 to 4 L12 dimers bind in a sequential fashion. Binds GTP-bound translation factors.

In terms of biological role, forms part of the ribosomal stalk which helps the ribosome interact with GTP-bound translation factors. Is thus essential for accurate translation. This Syntrophobacter fumaroxidans (strain DSM 10017 / MPOB) protein is Large ribosomal subunit protein bL12.